A 188-amino-acid chain; its full sequence is Small ribosomal subunit protein uS7 (188 aa).

This sequence belongs to the universal ribosomal protein uS7 family. In terms of assembly, part of the 30S ribosomal subunit.

Functionally, one of the primary rRNA binding proteins, it binds directly to 16S rRNA where it nucleates assembly of the head domain of the 30S subunit. Is located at the subunit interface close to the decoding center. This Methanococcus maripaludis (strain C6 / ATCC BAA-1332) protein is Small ribosomal subunit protein uS7.